A 288-amino-acid polypeptide reads, in one-letter code: ATP synthase gamma chain (288 aa).

Belongs to the ATPase gamma chain family. F-type ATPases have 2 components, CF(1) - the catalytic core - and CF(0) - the membrane proton channel. CF(1) has five subunits: alpha(3), beta(3), gamma(1), delta(1), epsilon(1). CF(0) has three main subunits: a, b and c.

Its subcellular location is the cell inner membrane. In terms of biological role, produces ATP from ADP in the presence of a proton gradient across the membrane. The gamma chain is believed to be important in regulating ATPase activity and the flow of protons through the CF(0) complex. This chain is ATP synthase gamma chain, found in Vibrio vulnificus (strain CMCP6).